The sequence spans 284 residues: uncharacterized protein (284 aa).

The N-terminal stretch at 1–24 (MLYSRESRTTVLFLALVTSLTVLC) is a signal peptide. The Cytoplasmic portion of the chain corresponds to 25–84 (HSVDVTTVFTTSTITEITTVTAAPQPQNKAETALNTATNIIQTMQFLFNCAPFKWKGPLK). Residues 85-104 (ITSCALNFIVLLLTAWGYLL) traverse the membrane as a helical segment. The Extracellular portion of the chain corresponds to 105–284 (KYLQENKLNS…SVHMYSSSLL (180 aa)). N-linked (GlcNAc...) asparagine glycosylation occurs at N270.

To yeast YNL019c.

The protein localises to the cell membrane. This is an uncharacterized protein from Saccharomyces cerevisiae (strain ATCC 204508 / S288c) (Baker's yeast).